A 911-amino-acid chain; its full sequence is Protein translocase subunit SecA (911 aa).

Residues glutamine 87, 105-109 (GEGKT), and aspartate 512 contribute to the ATP site. The span at 561-571 (RHESRRIDNQL) shows a compositional bias: basic and acidic residues. Residues 561–583 (RHESRRIDNQLRGRSGRQGDPGS) form a disordered region. Positions 895, 897, 906, and 907 each coordinate Zn(2+).

This sequence belongs to the SecA family. Monomer and homodimer. Part of the essential Sec protein translocation apparatus which comprises SecA, SecYEG and auxiliary proteins SecDF-YajC and YidC. The cofactor is Zn(2+).

It is found in the cell inner membrane. It localises to the cytoplasm. It carries out the reaction ATP + H2O + cellular proteinSide 1 = ADP + phosphate + cellular proteinSide 2.. Part of the Sec protein translocase complex. Interacts with the SecYEG preprotein conducting channel. Has a central role in coupling the hydrolysis of ATP to the transfer of proteins into and across the cell membrane, serving both as a receptor for the preprotein-SecB complex and as an ATP-driven molecular motor driving the stepwise translocation of polypeptide chains across the membrane. The polypeptide is Protein translocase subunit SecA (Pseudomonas putida (strain W619)).